Reading from the N-terminus, the 177-residue chain is Interleukin-1 receptor antagonist protein (177 aa).

An N-terminal signal peptide occupies residues 1–25; it reads MRPSRSTRRHLISLLLFLFHSETAC. C91 and C141 form a disulfide bridge. An N-linked (GlcNAc...) asparagine glycan is attached at N109.

This sequence belongs to the IL-1 family.

Its subcellular location is the secreted. Its function is as follows. Anti-inflammatory antagonist of interleukin-1 family of proinflammatory cytokines such as interleukin-1beta/IL1B and interleukin-1alpha/IL1A. Protects from immune dysregulation and uncontrolled systemic inflammation triggered by IL1 for a range of innate stimulatory agents such as pathogens. This Oryctolagus cuniculus (Rabbit) protein is Interleukin-1 receptor antagonist protein (IL1RN).